Reading from the N-terminus, the 1728-residue chain is Lysophospholipase NTE1 (1728 aa).

The Cytoplasmic portion of the chain corresponds to M1–K44. A helical membrane pass occupies residues A45–I65. The Lumenal segment spans residues S66–H97. Residues I98 to S118 traverse the membrane as a helical segment. At Y119–I1728 the chain is on the cytoplasmic side. A compositionally biased stretch (low complexity) spans S141–S150. Disordered regions lie at residues S141–R167, R285–T368, N406–S436, T454–P488, N596–R660, and A687–F756. A compositionally biased stretch (basic and acidic residues) spans L153–T162. Composition is skewed to polar residues over residues S293–D303 and M326–P336. Residues S345–S367 show a composition bias toward acidic residues. Composition is skewed to polar residues over residues N406–N424, T454–I479, and K599–L609. Residues T610–Q628 are compositionally biased toward low complexity. Composition is skewed to polar residues over residues E642 to T657 and I729 to F756. A nucleoside 3',5'-cyclic phosphate contacts are provided by residues S854–L987 and S983–K1121. Residues P1034–D1055 are disordered. Over residues L1036–E1049 the composition is skewed to acidic residues. The region spanning L1422–K1586 is the PNPLA domain. Positions G1426 to G1431 match the GXGXXG motif. The GXSXG motif lies at G1453–G1457. Catalysis depends on S1455, which acts as the Nucleophile. The active-site Proton acceptor is the D1573. A DGA/G motif is present at residues D1573–G1575.

Belongs to the NTE family.

It localises to the endoplasmic reticulum membrane. It catalyses the reaction a 1-acyl-sn-glycero-3-phosphocholine + H2O = sn-glycerol 3-phosphocholine + a fatty acid + H(+). Its activity is regulated as follows. Inhibited by organophosphorus esters. Its function is as follows. Intracellular phospholipase B that catalyzes the double deacylation of phosphatidylcholine (PC) to glycerophosphocholine (GroPCho). Plays an important role in membrane lipid homeostasis. Responsible for the rapid PC turnover in response to inositol, elevated temperatures, or when choline is present in the growth medium. In Candida glabrata (strain ATCC 2001 / BCRC 20586 / JCM 3761 / NBRC 0622 / NRRL Y-65 / CBS 138) (Yeast), this protein is Lysophospholipase NTE1 (NTE1).